Reading from the N-terminus, the 75-residue chain is SPbeta prophage-derived uncharacterized protein YomT (75 aa).

This is SPbeta prophage-derived uncharacterized protein YomT (yomT) from Bacillus subtilis (strain 168).